A 434-amino-acid chain; its full sequence is Tryptophan--tRNA ligase (434 aa).

ATP-binding positions include 14–16 and 22–23; these read TTS and GN. The 'HIGH' region signature appears at 15-23; the sequence is TSGTPHLGN. Residue Asp-147 coordinates L-tryptophan. Residues 159–161, Leu-199, and 206–210 each bind ATP; these read GRD and KMSKS. Residues 206-210 carry the 'KMSKS' region motif; that stretch reads KMSKS.

It belongs to the class-I aminoacyl-tRNA synthetase family. As to quaternary structure, homodimer.

The protein resides in the cytoplasm. The catalysed reaction is tRNA(Trp) + L-tryptophan + ATP = L-tryptophyl-tRNA(Trp) + AMP + diphosphate + H(+). Functionally, catalyzes the attachment of tryptophan to tRNA(Trp). This chain is Tryptophan--tRNA ligase, found in Xylella fastidiosa (strain 9a5c).